A 393-amino-acid chain; its full sequence is RNA pseudouridine synthase 7 (393 aa).

In terms of domain architecture, S4 RNA-binding spans 49–118; it reads KTIVDLFTDE…GDITILQNEA (70 aa). Asp162 is a catalytic residue.

It belongs to the pseudouridine synthase RluA family.

It carries out the reaction a uridine in RNA = a pseudouridine in RNA. The protein is RNA pseudouridine synthase 7 of Oryza sativa subsp. japonica (Rice).